The sequence spans 599 residues: Elongation factor 4 (599 aa).

The 183-residue stretch at 2-184 (NYKRNFSIIA…RLVRDIPAPK (183 aa)) folds into the tr-type G domain. GTP contacts are provided by residues 14–19 (DHGKST) and 131–134 (NKID).

It belongs to the TRAFAC class translation factor GTPase superfamily. Classic translation factor GTPase family. LepA subfamily.

The protein localises to the cell membrane. It carries out the reaction GTP + H2O = GDP + phosphate + H(+). Functionally, required for accurate and efficient protein synthesis under certain stress conditions. May act as a fidelity factor of the translation reaction, by catalyzing a one-codon backward translocation of tRNAs on improperly translocated ribosomes. Back-translocation proceeds from a post-translocation (POST) complex to a pre-translocation (PRE) complex, thus giving elongation factor G a second chance to translocate the tRNAs correctly. Binds to ribosomes in a GTP-dependent manner. The protein is Elongation factor 4 of Hamiltonella defensa subsp. Acyrthosiphon pisum (strain 5AT).